The primary structure comprises 192 residues: Pupal cuticle protein (192 aa).

A signal peptide spans 1–15 (MHLLMSLFGVLAVMQ). In terms of domain architecture, Chitin-binding type R&amp;R spans 45–106 (DGNYRYAYET…PVGDHIPKVP (62 aa)). A compositionally biased stretch (polar residues) spans 149–163 (QDQTTPRSRPSSTPK). The segment at 149–192 (QDQTTPRSRPSSTPKTIYLTHPPTLSDAPTRRPLRQRQNDSRRR) is disordered.

Functionally, component of the cuticle of the pupa of fruit fly. The polypeptide is Pupal cuticle protein (Pcp) (Drosophila pseudoobscura pseudoobscura (Fruit fly)).